The following is a 249-amino-acid chain: General transcription factor IIF subunit 2 (249 aa).

A2 is modified (N-acetylalanine). An N6-acetyllysine mark is found at K22, K33, and K137. At S142 the chain carries Phosphoserine. Positions 227 and 229 each coordinate DNA. S248 carries the phosphoserine modification.

This sequence belongs to the TFIIF beta subunit family. In terms of assembly, heterodimer of an alpha and a beta subunit. Interacts with HTATSF1 and GPBP1. Interacts with URI1. Interacts with GTF2B (via N-terminus); this interaction is inhibited in presence of GTF2F1. Part of TBP-based Pol II pre-initiation complex (PIC), in which Pol II core assembles with general transcription factors and other specific initiation factors including GTF2E1, GTF2E2, GTF2F1, GTF2F2, TCEA1, ERCC2, ERCC3, GTF2H2, GTF2H3, GTF2H4, GTF2H5, GTF2A1, GTF2A2, GTF2B and TBP; this large multi-subunit PIC complex mediates DNA unwinding and targets Pol II core to the transcription start site where the first phosphodiester bond forms.

The protein resides in the nucleus. TFIIF is a general transcription initiation factor that binds to RNA polymerase II and helps to recruit it to the initiation complex in collaboration with TFIIB. The chain is General transcription factor IIF subunit 2 (GTF2F2) from Homo sapiens (Human).